The primary structure comprises 369 residues: Septin-5 (369 aa).

Residue T13 is modified to Phosphothreonine. The Septin-type G domain occupies 41 to 314 (KGFDFTLMVA…ENYRAHCIQQ (274 aa)). The tract at residues 51–58 (GESGLGKS) is G1 motif. Residues 51–58 (GESGLGKS), T85, and G111 each bind GTP. The G3 motif stretch occupies residues 108–111 (DTPG). R168 carries the omega-N-methylarginine modification. Positions 189–192 (AKAD) are G4 motif. Residue 190 to 198 (KADCLVPSE) participates in GTP binding. A Phosphoserine modification is found at S225. Positions 248 and 263 each coordinate GTP. S327 is modified (phosphoserine). At T336 the chain carries Phosphothreonine. The stretch at 338-369 (DAETEKLIRMKDEELRRMQEMLQRMKQQMQDQ) forms a coiled coil.

Belongs to the TRAFAC class TrmE-Era-EngA-EngB-Septin-like GTPase superfamily. Septin GTPase family. Septins polymerize into heterooligomeric protein complexes that form filaments, and can associate with cellular membranes, actin filaments and microtubules. GTPase activity is required for filament formation. Interacts with SEPTIN2 and SEPTIN5. In platelets, associated with a complex containing STX4. Interacts with PRKN; this interaction leads to SEPTIN5 ubiquitination and degradation. Interacts with DYRK1A. Interacts with STX1A; in the cerebellar cortex. In terms of processing, phosphorylated by DYRK1A. In platelets, phosphorylated in response to thrombin, phorbol-12-myristate-13-acetate and collagen. In terms of tissue distribution, expressed at high levels in the CNS, as well as in heart and platelets (at protein level).

It is found in the cytoplasm. Its subcellular location is the cytoskeleton. Its function is as follows. Filament-forming cytoskeletal GTPase. May play a role in cytokinesis (Potential). May play a role in platelet secretion. In Homo sapiens (Human), this protein is Septin-5.